The primary structure comprises 366 residues: Transcription factor bHLH74 (366 aa).

A compositionally biased stretch (gly residues) spans 1-11 (MGGESNEGGEM). 2 disordered regions span residues 1-20 (MGGE…DDES) and 123-201 (GESS…APKE). Composition is skewed to basic and acidic residues over residues 123–134 (GESSHEDHHQVS) and 159–170 (KAVEEFQEDPQR). A bHLH domain is found at 212–262 (QATNSHSLAERVRREKISERMRLLQELVPGCNKITGKAVMLDEIINYVQSL).

Homodimer. Interacts with IBH1. Binds reversibly to CRY2 after blue light illumination. As to expression, expressed constitutively in roots, leaves, stems, and flowers.

It is found in the nucleus. Its function is as follows. Transcriptional activator involved in cell elongation. Regulates the expression of a subset of genes involved in cell expansion by binding to the G-box motif. Binds to chromatin DNA of the FT gene and promotes its expression, and thus triggers flowering in response to blue light. This is Transcription factor bHLH74 (BHLH74) from Arabidopsis thaliana (Mouse-ear cress).